The primary structure comprises 272 residues: Shikimate dehydrogenase (NADP(+)) (272 aa).

Shikimate-binding positions include 14–16 (SKS) and Thr61. The Proton acceptor role is filled by Lys65. Glu77 contacts NADP(+). Residues Asn86 and Asp102 each contribute to the shikimate site. NADP(+) contacts are provided by residues 126 to 130 (GAGGA), 149 to 154 (NRTASR), and Met213. A shikimate-binding site is contributed by Tyr215. Position 237 (Gly237) interacts with NADP(+).

It belongs to the shikimate dehydrogenase family. Homodimer.

The enzyme catalyses shikimate + NADP(+) = 3-dehydroshikimate + NADPH + H(+). It participates in metabolic intermediate biosynthesis; chorismate biosynthesis; chorismate from D-erythrose 4-phosphate and phosphoenolpyruvate: step 4/7. Its function is as follows. Involved in the biosynthesis of the chorismate, which leads to the biosynthesis of aromatic amino acids. Catalyzes the reversible NADPH linked reduction of 3-dehydroshikimate (DHSA) to yield shikimate (SA). This is Shikimate dehydrogenase (NADP(+)) from Salmonella heidelberg (strain SL476).